A 377-amino-acid polypeptide reads, in one-letter code: Probable trehalose-phosphate phosphatase G (377 aa).

The segment at 1 to 20 (MDLNINKTTPVLSDPTTPVS) is disordered.

The protein belongs to the trehalose phosphatase family. It depends on a divalent metal cation as a cofactor.

It carries out the reaction alpha,alpha-trehalose 6-phosphate + H2O = alpha,alpha-trehalose + phosphate. Its pathway is glycan biosynthesis; trehalose biosynthesis. Removes the phosphate from trehalose 6-phosphate to produce free trehalose. Trehalose accumulation in plant may improve abiotic stress tolerance. In Arabidopsis thaliana (Mouse-ear cress), this protein is Probable trehalose-phosphate phosphatase G (TPPG).